We begin with the raw amino-acid sequence, 489 residues long: Dihydropyrimidinase 1 (489 aa).

Zn(2+) is bound by residues histidine 61, histidine 63, and lysine 156. An N6-carboxylysine modification is found at lysine 156. Tyrosine 161 is a substrate binding site. Residues histidine 189 and histidine 245 each contribute to the Zn(2+) site. A substrate-binding site is contributed by serine 295. Position 323 (aspartate 323) interacts with Zn(2+). Asparagine 344 provides a ligand contact to substrate.

This sequence belongs to the metallo-dependent hydrolases superfamily. Hydantoinase/dihydropyrimidinase family. Homotetramer. Requires Zn(2+) as cofactor. Post-translationally, carboxylation allows a single lysine to coordinate two zinc ions. As to expression, in L1-L2 larvae, expressed in body hypodermal cells, hemidesmosomes and in a neuronal cell between the pharynx and ring neuropil. In adults, expression is seen in body hypodermal cells and pharynx.

The protein resides in the nucleus. It catalyses the reaction 5,6-dihydrouracil + H2O = 3-(carbamoylamino)propanoate + H(+). This Caenorhabditis elegans protein is Dihydropyrimidinase 1 (dhp-1).